A 140-amino-acid polypeptide reads, in one-letter code: MSTIRCDIVSAEQEIFRGEATLVVATGELGELGIAPKHAPLITRLKPGKVVVTTASGEQLDFAISGGILEVQPQVVTVLVDTAIRAQDIDEAAVRKAKEEAERLLANRGDTVDVEQAQRQLAEATVQLQALERLRRTLKH.

Belongs to the ATPase epsilon chain family. F-type ATPases have 2 components, CF(1) - the catalytic core - and CF(0) - the membrane proton channel. CF(1) has five subunits: alpha(3), beta(3), gamma(1), delta(1), epsilon(1). CF(0) has three main subunits: a, b and c.

It is found in the cell inner membrane. Its function is as follows. Produces ATP from ADP in the presence of a proton gradient across the membrane. In Xanthomonas campestris pv. campestris (strain 8004), this protein is ATP synthase epsilon chain.